The primary structure comprises 350 residues: MFIVAVLMLAFLIFVHELGHFIIARICGVKVEVFSIGFGKKLWFFKLFGTQFALSLIPLGGYVKLKGMDKEENEENKINQANDSYAQKSPFQKLWILFGGAFFNFLFAVLVYFFLALSGEKVLLPVIGGLEKNALEAGLLKGDRILSINHQKIASFREIREIVARSQGELILEIERNNQILEKRLTPKIVAVISESNDPNEIIKYKIIGIKPDMQKMGVVSYSVFQAFEKALSRFKEGVVLIVDSLRRLIMGSASVKELSGVIGIVGALSHANSVSMLLLFGAFLSINLGILNLLPIPALDGAQMLGVVFKNIFHIALPTPIQNALWLVGVGFLVFVMFLGLFNDITRLL.

A Zn(2+)-binding site is contributed by H16. E17 is a catalytic residue. A Zn(2+)-binding site is contributed by H20. 5 helical membrane-spanning segments follow: residues 43-63 (WFFK…GGYV), 94-114 (LWIL…VYFF), 249-269 (LIMG…VGAL), 277-297 (MLLL…LLPI), and 326-346 (LWLV…FNDI). Positions 108–177 (AVLVYFFLAL…GELILEIERN (70 aa)) constitute a PDZ domain.

The protein belongs to the peptidase M50B family. Zn(2+) is required as a cofactor.

It localises to the cell inner membrane. This is Putative zinc metalloprotease jhp_0242 from Helicobacter pylori (strain J99 / ATCC 700824) (Campylobacter pylori J99).